The sequence spans 390 residues: Phosphopentomutase (390 aa).

Mn(2+)-binding residues include Asp12, Asp284, His289, Asp325, His326, and His337.

It belongs to the phosphopentomutase family. It depends on Mn(2+) as a cofactor.

It is found in the cytoplasm. The catalysed reaction is 2-deoxy-alpha-D-ribose 1-phosphate = 2-deoxy-D-ribose 5-phosphate. It catalyses the reaction alpha-D-ribose 1-phosphate = D-ribose 5-phosphate. Its pathway is carbohydrate degradation; 2-deoxy-D-ribose 1-phosphate degradation; D-glyceraldehyde 3-phosphate and acetaldehyde from 2-deoxy-alpha-D-ribose 1-phosphate: step 1/2. Its function is as follows. Isomerase that catalyzes the conversion of deoxy-ribose 1-phosphate (dRib-1-P) and ribose 1-phosphate (Rib-1-P) to deoxy-ribose 5-phosphate (dRib-5-P) and ribose 5-phosphate (Rib-5-P), respectively. This Macrococcus caseolyticus (strain JCSC5402) (Macrococcoides caseolyticum) protein is Phosphopentomutase.